Here is a 356-residue protein sequence, read N- to C-terminus: S-adenosylmethionine:tRNA ribosyltransferase-isomerase (356 aa).

The protein belongs to the QueA family. As to quaternary structure, monomer.

It localises to the cytoplasm. The catalysed reaction is 7-aminomethyl-7-carbaguanosine(34) in tRNA + S-adenosyl-L-methionine = epoxyqueuosine(34) in tRNA + adenine + L-methionine + 2 H(+). The protein operates within tRNA modification; tRNA-queuosine biosynthesis. Its function is as follows. Transfers and isomerizes the ribose moiety from AdoMet to the 7-aminomethyl group of 7-deazaguanine (preQ1-tRNA) to give epoxyqueuosine (oQ-tRNA). This Yersinia pestis protein is S-adenosylmethionine:tRNA ribosyltransferase-isomerase.